A 449-amino-acid polypeptide reads, in one-letter code: Anther-specific proline-rich protein APG (449 aa).

Over residues proline 1–proline 118 the composition is skewed to pro residues. The interval proline 1–isoleucine 123 is disordered. Serine 132 (nucleophile) is an active-site residue. Catalysis depends on residues aspartate 425 and histidine 428.

It belongs to the 'GDSL' lipolytic enzyme family. As to expression, found in anther, only in male fertile plants.

This Brassica napus (Rape) protein is Anther-specific proline-rich protein APG (APG).